A 1073-amino-acid chain; its full sequence is MPKRTDIKSILILGAGPIVIGQACEFDYSGAQACKALREEGYRVILVNSNPATIMTDPAMADATYIEPIKWATVAKIIEKERPDALLPTMGGQTALNCALDLERHGVLEKFGVEMIGANADTIDKAEDRSRFDKAMKDIGLACPRSGIAHSMEEAYGVLEQVGFPCIIRPSFTMGGTGGGIAYNREEFEEICARGLDLSPTNELLIDESLIGWKEYEMEVVRDKKDNCIIVCSIENFDPMGVHTGDSITVAPAQTLTDKEYQIMRNASLAVLREIGVETGGSNVQFGICPNTGRMVVIEMNPRVSRSSALASKATGFPIAKIAAKLAVGYTLDELQNDITGGRTPASFEPAIDYVVTKIPRFAFEKFPKADARLTTQMKSVGEVMAIGRTFQESVQKALRGLEVGATGFDPKLDLNDPEADSILKRELTVPSAERVWYVADAFRAGKSVEEVFELTRIDEWFLVQIEDLVKDEEKVKTLGLSSIDRELMYKLKRKGFSDARLAKLLGVTEKNLRSHRHKLKVLPVYKRVDTCAAEFATDTAYMYSTYEEECEANPSSREKIMILGGGPNRIGQGIEFDYCCVHAALAMREDGYETIMVNCNPETVSTDYDTSDRLYFEPVTLEDVLEIVRVEQPKGVIVQYGGQTPLKLCRALEEAGVPIIGTSPDAIDRAEDRERFQQMVQRLNLRQPANATARSEDEALAASKAIGYPLVVRPSYVLGGRAMEIVYQEEELKRYMREAVQVSNDSPVLLDHFLNCAIEVDIDAVCDGEIVVIGAIMQHIEQAGVHSGDSACSLPPYSLPQHIQDEIREQVKKMALELGVVGLMNVQMAVQGEDIFVIEVNPRASRTVPFVSKCVGESLAKVAARVMAGKTLAEVGFTQEIIPPFFSVKEAVFPFAKFPGVDPILGPEMKSTGEVMGVGDSFAEAFAKAQLGASEILPTAGCAFISVREDDKPFAAQVAGDLVALGFEVVATAGTARVIEAAGLPVRRVNKVTEGRPHVVDMIKNDEVTLIINTTEGRQSIADSYSIRRNALQHKICCTTTIAGGQAICEALKFGPEKTVRRLQDLHAGIKA.

The carboxyphosphate synthetic domain stretch occupies residues 2–403 (PKRTDIKSIL…SVQKALRGLE (402 aa)). R129, R169, G175, G176, E208, L210, E215, G241, V242, H243, Q285, and E299 together coordinate ATP. In terms of domain architecture, ATP-grasp 1 spans 133–328 (DKAMKDIGLA…IAKIAAKLAV (196 aa)). Mg(2+)-binding residues include Q285, E299, and N301. The Mn(2+) site is built by Q285, E299, and N301. Positions 404–553 (VGATGFDPKL…YSTYEEECEA (150 aa)) are oligomerization domain. Residues 554–935 (NPSSREKIMI…AFAKAQLGAS (382 aa)) are carbamoyl phosphate synthetic domain. Residues 678 to 869 (QQMVQRLNLR…LAKVAARVMA (192 aa)) form the ATP-grasp 2 domain. ATP-binding residues include R714, H753, L755, E760, G785, V786, H787, S788, Q828, and E840. Mg(2+) contacts are provided by Q828, E840, and N842. The Mn(2+) site is built by Q828, E840, and N842. Residues 936-1073 (EILPTAGCAF…LQDLHAGIKA (138 aa)) form the MGS-like domain. The allosteric domain stretch occupies residues 936–1073 (EILPTAGCAF…LQDLHAGIKA (138 aa)).

Belongs to the CarB family. Composed of two chains; the small (or glutamine) chain promotes the hydrolysis of glutamine to ammonia, which is used by the large (or ammonia) chain to synthesize carbamoyl phosphate. Tetramer of heterodimers (alpha,beta)4. Requires Mg(2+) as cofactor. Mn(2+) is required as a cofactor.

It carries out the reaction hydrogencarbonate + L-glutamine + 2 ATP + H2O = carbamoyl phosphate + L-glutamate + 2 ADP + phosphate + 2 H(+). The enzyme catalyses hydrogencarbonate + NH4(+) + 2 ATP = carbamoyl phosphate + 2 ADP + phosphate + 2 H(+). It functions in the pathway amino-acid biosynthesis; L-arginine biosynthesis; carbamoyl phosphate from bicarbonate: step 1/1. It participates in pyrimidine metabolism; UMP biosynthesis via de novo pathway; (S)-dihydroorotate from bicarbonate: step 1/3. Its function is as follows. Large subunit of the glutamine-dependent carbamoyl phosphate synthetase (CPSase). CPSase catalyzes the formation of carbamoyl phosphate from the ammonia moiety of glutamine, carbonate, and phosphate donated by ATP, constituting the first step of 2 biosynthetic pathways, one leading to arginine and/or urea and the other to pyrimidine nucleotides. The large subunit (synthetase) binds the substrates ammonia (free or transferred from glutamine from the small subunit), hydrogencarbonate and ATP and carries out an ATP-coupled ligase reaction, activating hydrogencarbonate by forming carboxy phosphate which reacts with ammonia to form carbamoyl phosphate. In Pseudomonas aeruginosa (strain ATCC 15692 / DSM 22644 / CIP 104116 / JCM 14847 / LMG 12228 / 1C / PRS 101 / PAO1), this protein is Carbamoyl phosphate synthase large chain.